The chain runs to 296 residues: Chronophin (296 aa).

D25 functions as the Nucleophile in the catalytic mechanism. Residues D25 and N27 each contribute to the Mg(2+) site. The active-site Proton donor is the N27. Substrate-binding positions include S58–N60, H182, and K213. D238 serves as a coordination point for Mg(2+).

It belongs to the HAD-like hydrolase superfamily. Homodimer. It depends on Mg(2+) as a cofactor. Detected in brain (at protein level).

Its subcellular location is the cytoplasm. It is found in the cytosol. The protein localises to the cytoskeleton. It localises to the cell projection. The protein resides in the ruffle membrane. Its subcellular location is the lamellipodium membrane. It is found in the cell membrane. It catalyses the reaction pyridoxal 5'-phosphate + H2O = pyridoxal + phosphate. The catalysed reaction is pyridoxine 5'-phosphate + H2O = pyridoxine + phosphate. It carries out the reaction pyridoxamine + phosphate = pyridoxamine 5'-phosphate + H2O. The enzyme catalyses O-phospho-L-seryl-[protein] + H2O = L-seryl-[protein] + phosphate. In terms of biological role, functions as a pyridoxal phosphate (PLP) phosphatase, which also catalyzes the dephosphorylation of pyridoxine 5'-phosphate (PNP) and pyridoxamine 5'-phosphate (PMP), with order of substrate preference PLP &gt; PNP &gt; PMP and therefore plays a role in vitamin B6 metabolism. Also functions as a protein serine phosphatase that specifically dephosphorylates 'Ser-3' in proteins of the actin-depolymerizing factor (ADF)/cofilin family like CFL1 and DSTN. Thereby, regulates cofilin-dependent actin cytoskeleton reorganization, being required for normal progress through mitosis and normal cytokinesis. Does not dephosphorylate phosphothreonines in LIMK1. Does not dephosphorylate peptides containing phosphotyrosine. This chain is Chronophin, found in Bos taurus (Bovine).